A 467-amino-acid chain; its full sequence is Protein PHOSPHATE STARVATION RESPONSE 3 (467 aa).

Positions 227 to 266 are disordered; that stretch reads MSLPVSSCSDQEDLQDARSPAKVQLSSSRSSSGTASCNKP. One can recognise an HTH myb-type domain in the interval 262–322; sequence SCNKPRLRWT…HLQKYRLAKY (61 aa). The H-T-H motif DNA-binding region spans 293-318; sequence PKGVLKLMKVEGLTIYHIKSHLQKYR. Positions 327–337 are enriched in basic and acidic residues; sequence KEDKKQEEKKT. 2 disordered regions span residues 327-353 and 400-467; these read KEDK…KSAQ and RESI…VHDE. Residues 402–412 show a composition bias toward polar residues; it reads SISSMTSTTEG. Composition is skewed to basic and acidic residues over residues 419 to 428 and 438 to 467; these read PMEKTEDKAE and RITD…VHDE.

The protein resides in the nucleus. Its function is as follows. Transcription factor involved in phosphate starvation signaling. Binds to P1BS, an imperfect palindromic sequence 5'-GNATATNC-3', to promote the expression of inorganic phosphate (Pi) starvation-responsive genes. Functionally redundant with PHR1 and PHR2 in regulating Pi starvation response and Pi homeostasis. The sequence is that of Protein PHOSPHATE STARVATION RESPONSE 3 from Oryza sativa subsp. indica (Rice).